The primary structure comprises 74 residues: VLIIAVLFLTACQLTTAETSSRGKQKHRALRSTDKNSRMTKRCTPAGDACDATTECCILFCNLATKKCQVPTFP.

The N-terminal stretch at 1 to 17 (VLIIAVLFLTACQLTTA) is a signal peptide. Positions 18–40 (ETSSRGKQKHRALRSTDKNSRMT) are excised as a propeptide. Positions 19–41 (TSSRGKQKHRALRSTDKNSRMTK) are disordered. 3 disulfide bridges follow: Cys43/Cys57, Cys50/Cys61, and Cys56/Cys68.

It belongs to the conotoxin O1 superfamily. Expressed by the venom duct.

The protein localises to the secreted. The chain is Conotoxin AbVII from Conus abbreviatus (Abbreviated cone).